The sequence spans 270 residues: 3-phenylpropionate-dihydrodiol/cinnamic acid-dihydrodiol dehydrogenase (270 aa).

10-34 (FITGGGSGLGLALVERFIEEGAQVA) contacts NAD(+). Ser143 serves as a coordination point for substrate. The Proton acceptor role is filled by Tyr156.

Belongs to the short-chain dehydrogenases/reductases (SDR) family.

The catalysed reaction is 3-(cis-5,6-dihydroxycyclohexa-1,3-dien-1-yl)propanoate + NAD(+) = 3-(2,3-dihydroxyphenyl)propanoate + NADH + H(+). It catalyses the reaction (2E)-3-(cis-5,6-dihydroxycyclohexa-1,3-dien-1-yl)prop-2-enoate + NAD(+) = (2E)-3-(2,3-dihydroxyphenyl)prop-2-enoate + NADH + H(+). It participates in aromatic compound metabolism; 3-phenylpropanoate degradation. Functionally, converts 3-phenylpropionate-dihydrodiol (PP-dihydrodiol) and cinnamic acid-dihydrodiol (CI-dihydrodiol) into 3-(2,3-dihydroxylphenyl)propanoic acid (DHPP) and 2,3-dihydroxicinnamic acid (DHCI), respectively. This is 3-phenylpropionate-dihydrodiol/cinnamic acid-dihydrodiol dehydrogenase from Shigella flexneri serotype 5b (strain 8401).